A 277-amino-acid chain; its full sequence is 3-methyl-2-oxobutanoate hydroxymethyltransferase (277 aa).

Aspartate 43 and aspartate 82 together coordinate Mg(2+). Residues 43–44, aspartate 82, and lysine 112 contribute to the 3-methyl-2-oxobutanoate site; that span reads DS. Glutamate 114 serves as a coordination point for Mg(2+). Glutamate 181 (proton acceptor) is an active-site residue.

This sequence belongs to the PanB family. In terms of assembly, homodecamer; pentamer of dimers. Mg(2+) serves as cofactor.

It localises to the cytoplasm. It carries out the reaction 3-methyl-2-oxobutanoate + (6R)-5,10-methylene-5,6,7,8-tetrahydrofolate + H2O = 2-dehydropantoate + (6S)-5,6,7,8-tetrahydrofolate. It participates in cofactor biosynthesis; (R)-pantothenate biosynthesis; (R)-pantoate from 3-methyl-2-oxobutanoate: step 1/2. In terms of biological role, catalyzes the reversible reaction in which hydroxymethyl group from 5,10-methylenetetrahydrofolate is transferred onto alpha-ketoisovalerate to form ketopantoate. This Listeria innocua serovar 6a (strain ATCC BAA-680 / CLIP 11262) protein is 3-methyl-2-oxobutanoate hydroxymethyltransferase.